The following is a 118-amino-acid chain: Large ribosomal subunit protein uL18 (118 aa).

It belongs to the universal ribosomal protein uL18 family. Part of the 50S ribosomal subunit; part of the 5S rRNA/L5/L18/L25 subcomplex. Contacts the 5S and 23S rRNAs.

Its function is as follows. This is one of the proteins that bind and probably mediate the attachment of the 5S RNA into the large ribosomal subunit, where it forms part of the central protuberance. The polypeptide is Large ribosomal subunit protein uL18 (Campylobacter concisus (strain 13826)).